We begin with the raw amino-acid sequence, 692 residues long: Acyl-coenzyme A oxidase 2, peroxisomal (692 aa).

The transit peptide at 1 to 49 (MESRREKNPMTEEESDGLIAARRIQRLSLHLSPSLTPSPSLPLVQTETC) directs the protein to the peroxisome. FAD is bound by residues threonine 186, serine 192, glycine 225, arginine 365, glutamine 384, glycine 452, and threonine 473. Residue glutamate 475 is the Proton acceptor of the active site. Residue aspartate 477 coordinates FAD.

This sequence belongs to the acyl-CoA oxidase family. Homodimer. The cofactor is FAD. Expressed mainly in flowers and young seedlings. Lower expression in roots, leaves and bracts.

The protein resides in the peroxisome. It carries out the reaction a 2,3-saturated acyl-CoA + O2 = a (2E)-enoyl-CoA + H2O2. Its function is as follows. Catalyzes the desaturation of long-chain acyl-CoAs to 2-trans-enoyl-CoAs. Active on substrates longer than C14 and mostly with C18-CoA. Activity on long-chain mono-unsaturated substrates is double than with the corresponding saturated substrates. The sequence is that of Acyl-coenzyme A oxidase 2, peroxisomal from Arabidopsis thaliana (Mouse-ear cress).